Here is a 964-residue protein sequence, read N- to C-terminus: Probable LRR receptor-like serine/threonine-protein kinase IRK (964 aa).

A signal peptide spans 1-20 (MYKALIFTVLLVSAVAPVRS). Topologically, residues 21-603 (LDPPLNDDVL…GHKRILLSIS (583 aa)) are extracellular. LRR repeat units follow at residues 92–116 (LQFLHKLSLSNNNLTGIINPNMLLS), 117–141 (LVNLKVVDLSSNGLSGSLPDEFFRQ), 143–166 (GSLRVLSLAKNKLTGKIPVSISSC), 168–190 (SLAALNLSSNGFSGSMPLGIWSL), 191–214 (NTLRSLDLSRNELEGEFPEKIDRL), 215–238 (NNLRALDLSRNRLSGPIPSEIGSC), 240–261 (LLKTIDLSENSLSGSLPNTFQQ), 263–286 (SLCYSLNLGKNALEGEVPKWIGEM), 287–310 (RSLETLDLSMNKFSGQVPDSIGNL), 312–334 (ALKVLNFSGNGLIGSLPVSTANC), and 335–358 (INLLALDLSGNSLTGKLPMWLFQD). N-linked (GlcNAc...) asparagine glycosylation is present at asparagine 104. Residue asparagine 173 is glycosylated (N-linked (GlcNAc...) asparagine). Asparagine 317 carries N-linked (GlcNAc...) asparagine glycosylation. N-linked (GlcNAc...) asparagine glycosylation occurs at asparagine 370. 7 LRR repeats span residues 375 to 399 (IKKIQVLDLSHNAFSGEIGAGLGDL), 400 to 423 (RDLEGLHLSRNSLTGPIPSTIGEL), 425 to 447 (HLSVLDVSHNQLNGMIPRETGGA), 448 to 471 (VSLEELRLENNLLEGNIPSSIKNC), 472 to 495 (SSLRSLILSHNKLLGSIPPELAKL), 496 to 519 (TRLEEVDLSFNELAGTLPKQLANL), and 521 to 544 (YLHTFNISHNHLFGELPAGGIFNG). Residue asparagine 470 is glycosylated (N-linked (GlcNAc...) asparagine). N-linked (GlcNAc...) asparagine glycans are attached at residues asparagine 526, asparagine 562, and asparagine 578. The helical transmembrane segment at 604–624 (SLIAISAAAAIVVGVIAITVL) threads the bilayer. The Cytoplasmic portion of the chain corresponds to 625-964 (NLRVRASTVS…SGSSDELGSS (340 aa)). Residues 678–951 (LNKDCELGRG…GEAVNILRMI (274 aa)) form the Protein kinase domain. Residues 684 to 692 (LGRGGFGAV) and lysine 706 each bind ATP.

The protein belongs to the protein kinase superfamily. Ser/Thr protein kinase family. Interacts with IRKI. In terms of processing, autophosphorylated. As to expression, highly expressed in root tips, shoot apices and developing flowers.

The protein localises to the cell membrane. The catalysed reaction is L-seryl-[protein] + ATP = O-phospho-L-seryl-[protein] + ADP + H(+). It catalyses the reaction L-threonyl-[protein] + ATP = O-phospho-L-threonyl-[protein] + ADP + H(+). The chain is Probable LRR receptor-like serine/threonine-protein kinase IRK from Arabidopsis thaliana (Mouse-ear cress).